A 127-amino-acid polypeptide reads, in one-letter code: Small ribosomal subunit protein uS11 (127 aa).

This sequence belongs to the universal ribosomal protein uS11 family. In terms of assembly, part of the 30S ribosomal subunit. Interacts with proteins S7 and S18. Binds to IF-3.

Located on the platform of the 30S subunit, it bridges several disparate RNA helices of the 16S rRNA. Forms part of the Shine-Dalgarno cleft in the 70S ribosome. The sequence is that of Small ribosomal subunit protein uS11 from Streptococcus thermophilus (strain CNRZ 1066).